The sequence spans 1073 residues: Serine/threonine-protein phosphatase 6 regulatory ankyrin repeat subunit C (1073 aa).

ANK repeat units lie at residues 7-36, 40-69, 73-102, 106-135, 139-168, 172-201, 205-234, 238-267, 271-301, 305-334, 338-367, 371-400, 422-451, 455-484, 488-544, 548-578, 583-612, 616-645, 650-679, 686-715, 719-748, 752-781, 789-818, 821-851, 856-885, 889-919, 923-952, and 959-988; these read TDQP…NINV, ERRT…NVNA, VWLT…DVNA, YWQT…TVNV, TGRT…SLST, KDRQ…DVMC, KGYT…EIDE, FGNT…NVNQ, KGFT…DVNF, EGKS…EIDC, YGNT…DTAR, HDMF…LYSI, LGRT…DLRR, FGRT…SINE, KGCT…DPSL, QGYT…CLED, IPVS…NLDV, KGRT…SALV, RKWT…RADI, HGQT…TADA, RGRT…FVLC, KGRT…STDP, SGYS…FAYL, NPFT…KIVN, KGRT…EVDT, LGRT…NITV, NKNT…DLGL, and ALQM…TVLA.

In terms of assembly, protein phosphatase 6 (PP6) holoenzyme is proposed to be a heterotrimeric complex formed by the catalytic subunit, a SAPS domain-containing subunit (PP6R) and an ankyrin repeat-domain containing regulatory subunit (ARS).

Functionally, putative regulatory subunit of protein phosphatase 6 (PP6) that may be involved in the recognition of phosphoprotein substrates. The protein is Serine/threonine-protein phosphatase 6 regulatory ankyrin repeat subunit C (ANKRD52) of Gallus gallus (Chicken).